Consider the following 607-residue polypeptide: Autophagy-related protein 22-2 (607 aa).

A disordered region spans residues 9 to 31; the sequence is FQSPSPDEGVQQRPPRYVGEDTT. The helical transmembrane segment at 44–64 threads the bilayer; sequence YGIAAEVFAVCGVGSFLPLTL. N-linked (GlcNAc...) asparagine glycans are attached at residues asparagine 88 and asparagine 91. Helical transmembrane passes span 111 to 131, 143 to 160, and 161 to 178; these read SFAMYTFSLAVLIQALTLISF, TLLMVFGFAGALASMLFV, and FIAPPLFVIGSILVVVGV. Positions 203–263 are disordered; it reads QEGKADDGTE…GMGTKAPLSS (61 aa). An N-linked (GlcNAc...) asparagine glycan is attached at asparagine 235. 8 helical membrane passes run 277-297, 310-330, 381-401, 415-435, 450-470, 484-504, 521-543, and 552-572; these read GIGLGYCAAVFVQIISIIMLL, TLPMRFVLLLVGIWWGAFTLV, VLIFLVAWFLLSDAMATVSGT, PLIGLLSITATLSGMTGAFLW, IILCIALFEMIPLYGLLAYIP, WEIFPLAIVHGVVSGGLASYC, YALYAATDKGSSFIGPAIVGGIV, and GFFFMAILIVLPIPLVWMVNA. A disordered region spans residues 585–607; it reads TLGKSHGGPAEDAQEAEGLLARE.

It belongs to the ATG22 family.

The protein resides in the vacuole membrane. Functionally, vacuolar effluxer which mediate the efflux of amino acids resulting from autophagic degradation. The release of autophagic amino acids allows the maintenance of protein synthesis and viability during nitrogen starvation. The polypeptide is Autophagy-related protein 22-2 (atg22-2) (Penicillium rubens (strain ATCC 28089 / DSM 1075 / NRRL 1951 / Wisconsin 54-1255) (Penicillium chrysogenum)).